The chain runs to 271 residues: DNA-binding protein HEXBP (271 aa).

2 stretches are compositionally biased toward basic and acidic residues: residues 1–12 (MSETEDVKRPRT) and 21–42 (CGKE…DERS). Residues 1-42 (MSETEDVKRPRTESSTSCRNCGKEGHYARECPEADSKGDERS) are disordered. 4 CCHC-type zinc fingers span residues 16–33 (TSCR…ECPE), 43–60 (TTCF…ECPN), 70–87 (MTCF…DCPN), and 97–114 (FECY…DCPS). Residues 107 to 136 (HLSRDCPSSQGGSRGGYGQKRGRSGAQGGY) are disordered. The span at 118–136 (GSRGGYGQKRGRSGAQGGY) shows a compositional bias: gly residues. CCHC-type zinc fingers lie at residues 140-157 (RTCY…DCPN), 168-185 (RTCY…DCPN), 196-213 (RKCY…ECPS), 222-239 (RACY…ECPE), and 253-270 (RTCY…DCPS).

The protein localises to the nucleus. In terms of biological role, binds to single-stranded DNA located in the 5' hexanucleotide repeat region of the L.major leishmanolysin (GP63) gene. The polypeptide is DNA-binding protein HEXBP (HEXBP) (Leishmania major).